The primary structure comprises 210 residues: Resolvase (210 aa).

Residues valine 6 to glycine 150 form the Resolvase/invertase-type recombinase catalytic domain. Residue serine 14 is the O-(5'-phospho-DNA)-serine intermediate of the active site. The segment at residues glycine 191–valine 210 is a DNA-binding region (H-T-H motif).

It belongs to the site-specific recombinase resolvase family.

Its function is as follows. Site-specific recombination protein. This is Resolvase (stbA) from Pseudomonas syringae pv. tomato.